Reading from the N-terminus, the 538-residue chain is Small ribosomal subunit protein uS3m (538 aa).

The segment at 111–134 is disordered; it reads SSEGTEEERNEVRGRGAGKRVESI. A compositionally biased stretch (basic and acidic residues) spans 120–134; sequence NEVRGRGAGKRVESI.

This sequence belongs to the universal ribosomal protein uS3 family.

It localises to the mitochondrion. This chain is Small ribosomal subunit protein uS3m (RPS3), found in Oryza sativa subsp. japonica (Rice).